The following is a 349-amino-acid chain: 4-hydroxythreonine-4-phosphate dehydrogenase (349 aa).

His141 and Thr142 together coordinate substrate. A divalent metal cation-binding residues include His176, His221, and His276. The substrate site is built by Lys284, Asn293, and Arg302.

Belongs to the PdxA family. Homodimer. Zn(2+) serves as cofactor. The cofactor is Mg(2+). Requires Co(2+) as cofactor.

Its subcellular location is the cytoplasm. It catalyses the reaction 4-(phosphooxy)-L-threonine + NAD(+) = 3-amino-2-oxopropyl phosphate + CO2 + NADH. Its pathway is cofactor biosynthesis; pyridoxine 5'-phosphate biosynthesis; pyridoxine 5'-phosphate from D-erythrose 4-phosphate: step 4/5. In terms of biological role, catalyzes the NAD(P)-dependent oxidation of 4-(phosphooxy)-L-threonine (HTP) into 2-amino-3-oxo-4-(phosphooxy)butyric acid which spontaneously decarboxylates to form 3-amino-2-oxopropyl phosphate (AHAP). The chain is 4-hydroxythreonine-4-phosphate dehydrogenase from Methylorubrum extorquens (strain PA1) (Methylobacterium extorquens).